A 217-amino-acid polypeptide reads, in one-letter code: Melanocortin-2 receptor accessory protein 2A (217 aa).

Asn8 carries N-linked (GlcNAc...) asparagine glycosylation. A helical transmembrane segment spans residues 42–62 (IVIGFWVGLAVFVIFMFFVLT).

The protein belongs to the MRAP family. As to quaternary structure, interacts with mc4r.

The protein localises to the cell membrane. It localises to the endoplasmic reticulum membrane. In terms of biological role, inhibitor of melanocortin receptor 4 (mc4r), a receptor involved in energy homeostasis. Plays a role during larval development in the control of energy homeostasis and body weight regulation by decreasing ligand-sensitivity of mc4r and mc4r-mediated generation of cAMP, leading to stimulate growth during larval development. Acts by stabilizing an inactive conformation of mc4r during embryonic development, when all the energy consumed is obtained from the yolk sac, possibly to speed the rapid maturation to the mobile free-feeding juvenile stage reached at 5 dpf. The sequence is that of Melanocortin-2 receptor accessory protein 2A (mrap2a) from Danio rerio (Zebrafish).